A 207-amino-acid polypeptide reads, in one-letter code: 3-hexulose-6-phosphate synthase (207 aa).

This sequence belongs to the HPS/KGPDC family. HPS subfamily.

The enzyme catalyses D-ribulose 5-phosphate + formaldehyde = D-arabino-hex-3-ulose 6-phosphate. Its pathway is one-carbon metabolism; formaldehyde assimilation via RuMP pathway; D-fructose 6-phosphate from D-ribulose 5-phosphate and formaldehyde: step 1/2. In terms of biological role, catalyzes the condensation of ribulose 5-phosphate with formaldehyde to form 3-hexulose 6-phosphate. This Mycobacterium gastri protein is 3-hexulose-6-phosphate synthase (rmpA).